The chain runs to 95 residues: Aspartyl/glutamyl-tRNA(Asn/Gln) amidotransferase subunit C (95 aa).

It belongs to the GatC family. As to quaternary structure, heterotrimer of A, B and C subunits.

It catalyses the reaction L-glutamyl-tRNA(Gln) + L-glutamine + ATP + H2O = L-glutaminyl-tRNA(Gln) + L-glutamate + ADP + phosphate + H(+). The catalysed reaction is L-aspartyl-tRNA(Asn) + L-glutamine + ATP + H2O = L-asparaginyl-tRNA(Asn) + L-glutamate + ADP + phosphate + 2 H(+). In terms of biological role, allows the formation of correctly charged Asn-tRNA(Asn) or Gln-tRNA(Gln) through the transamidation of misacylated Asp-tRNA(Asn) or Glu-tRNA(Gln) in organisms which lack either or both of asparaginyl-tRNA or glutaminyl-tRNA synthetases. The reaction takes place in the presence of glutamine and ATP through an activated phospho-Asp-tRNA(Asn) or phospho-Glu-tRNA(Gln). This is Aspartyl/glutamyl-tRNA(Asn/Gln) amidotransferase subunit C from Dehalococcoides mccartyi (strain ATCC BAA-2100 / JCM 16839 / KCTC 5957 / BAV1).